A 193-amino-acid chain; its full sequence is Probable nicotinate-nucleotide adenylyltransferase (193 aa).

The protein belongs to the NadD family.

The enzyme catalyses nicotinate beta-D-ribonucleotide + ATP + H(+) = deamido-NAD(+) + diphosphate. It participates in cofactor biosynthesis; NAD(+) biosynthesis; deamido-NAD(+) from nicotinate D-ribonucleotide: step 1/1. Catalyzes the reversible adenylation of nicotinate mononucleotide (NaMN) to nicotinic acid adenine dinucleotide (NaAD). The chain is Probable nicotinate-nucleotide adenylyltransferase from Chlorobium phaeovibrioides (strain DSM 265 / 1930) (Prosthecochloris vibrioformis (strain DSM 265)).